The chain runs to 234 residues: Sugar fermentation stimulation protein A (234 aa).

The segment at residues L201–S220 is a DNA-binding region (H-T-H motif).

This sequence belongs to the SfsA family.

Its function is as follows. Binds to DNA non-specifically. Could be a regulatory factor involved in maltose metabolism. The chain is Sugar fermentation stimulation protein A from Salmonella gallinarum (strain 287/91 / NCTC 13346).